Consider the following 372-residue polypeptide: 3-ketodihydrosphingosine reductase TSC10 (372 aa).

An NADP(+)-binding site is contributed by Val-64. Residues Gly-67, Ser-69, Gly-71, Arg-92, Lys-96, Asp-123, and Leu-124 each contribute to the NADPH site. Residues 67 to 71 (GGSQG) carry the GXSXG motif. Asp-123 is an NADP(+) binding site. Ser-205 (proton donor) is an active-site residue. The NADP(+) site is built by Tyr-219, Lys-223, and Ser-254. Tyr-219 serves as the catalytic Proton acceptor. The active-site Lowers pKa of active site Tyr is Lys-223. A helical transmembrane segment spans residues 321-341 (LLQIPLAIFMCIFSPVWNAFV).

The protein belongs to the short-chain dehydrogenases/reductases (SDR) family.

Its subcellular location is the endoplasmic reticulum membrane. The catalysed reaction is sphinganine + NADP(+) = 3-oxosphinganine + NADPH + H(+). The protein operates within lipid metabolism; sphingolipid metabolism. Its function is as follows. Catalyzes the reduction of 3'-oxosphinganine (3-ketodihydrosphingosine/KDS) to sphinganine (dihydrosphingosine/DHS), the second step of de novo sphingolipid biosynthesis. The sequence is that of 3-ketodihydrosphingosine reductase TSC10 (TSC10) from Yarrowia lipolytica (strain CLIB 122 / E 150) (Yeast).